The chain runs to 1170 residues: Protein SCAR4 (1170 aa).

Disordered regions lie at residues 180–207 (KLGK…EDSR), 356–376 (NDAD…SDDK), 631–674 (AAPK…PRDL), 701–742 (SYSG…NQTG), 783–819 (NQRQ…SSPL), 960–980 (EESK…SDTY), and 1026–1046 (HNNP…HPLE). A compositionally biased stretch (basic residues) spans 183 to 195 (KDKRLRQSKKKGS). Over residues 198–207 (TIKETPEDSR) the composition is skewed to basic and acidic residues. Positions 356-365 (NDADSPASTE) are enriched in polar residues. Residues 366–376 (SEVKEAGSDDK) are compositionally biased toward basic and acidic residues. Polar residues-rich tracts occupy residues 640-668 (SQDG…TLMS), 701-716 (SYSG…IVSD), 783-818 (NQRQ…QSSP), and 967-980 (EQSP…SDTY). The WH2 domain maps to 1105–1123 (ENDSLLEIIRSKSFNLRPA).

It belongs to the SCAR/WAVE family. As to quaternary structure, interacts with SPK1. Expressed in expanding cotyledons, expanding leaves and expanding siliques containing developing embryos. Detected in unopened flower buds and in the expanding tip region of roots. Reduced expression in mature leaves.

Its subcellular location is the cytoplasm. The protein localises to the cytoskeleton. Functionally, involved in regulation of actin and microtubule organization. Part of a WAVE complex that activates the Arp2/3 complex. Regulates trichome branch positioning and expansion. This is Protein SCAR4 (SCAR4) from Arabidopsis thaliana (Mouse-ear cress).